Consider the following 37-residue polypeptide: Large ribosomal subunit protein bL36c (37 aa).

It belongs to the bacterial ribosomal protein bL36 family.

The protein localises to the plastid. It is found in the chloroplast. This is Large ribosomal subunit protein bL36c from Dioscorea elephantipes (Elephant's foot yam).